Here is a 144-residue protein sequence, read N- to C-terminus: Large ribosomal subunit protein uL13 (144 aa).

Belongs to the universal ribosomal protein uL13 family. In terms of assembly, part of the 50S ribosomal subunit.

Functionally, this protein is one of the early assembly proteins of the 50S ribosomal subunit, although it is not seen to bind rRNA by itself. It is important during the early stages of 50S assembly. The chain is Large ribosomal subunit protein uL13 from Oleidesulfovibrio alaskensis (strain ATCC BAA-1058 / DSM 17464 / G20) (Desulfovibrio alaskensis).